A 196-amino-acid polypeptide reads, in one-letter code: Dephospho-CoA kinase (196 aa).

Positions 6 to 196 constitute a DPCK domain; sequence AIALTGGIGT…QVERFLKTLL (191 aa). ATP is bound at residue 14–19; that stretch reads GTGKST.

The protein belongs to the CoaE family.

It localises to the cytoplasm. It catalyses the reaction 3'-dephospho-CoA + ATP = ADP + CoA + H(+). It participates in cofactor biosynthesis; coenzyme A biosynthesis; CoA from (R)-pantothenate: step 5/5. Catalyzes the phosphorylation of the 3'-hydroxyl group of dephosphocoenzyme A to form coenzyme A. The polypeptide is Dephospho-CoA kinase (Helicobacter pylori (strain ATCC 700392 / 26695) (Campylobacter pylori)).